Here is a 1383-residue protein sequence, read N- to C-terminus: MDEGVNLVFHKKVIDGTAIKRLISRLIDHFGMAHTSHILDQVKTLGFQQATATSISLGIDDLLTIPSKGWLVQDAEQQSLSLEKHHHYGNVHAVEKLRQSIEVWYATSEYLRQEMNPNFRMTDPFNPVHIMSFSGARGNASQVHQLVGMRGLMSDPQGQMIDLPIQSNLREGLSLTEYIISCYGARKGVVDTAVRTSDAGYLTRRLVEVVQHIVVRRTDCGTLRGISVSPRRMPERIFIQTLIGRVLADDIYIGSRCIAIRNQDIGIGLVNRFITFRIQPISIRTPFTCRSTSWICRLCYGRSPTHGDLVELGEAVGIIAGQSIGEPGTQLTLRTFHTGGVFTGGTAEHVRAPSNGKIKFNFNEALVHPARTRHGHPALLCSMDLDVTIESEDILHNLTIPPKSFLLVQNNQYVESEQVIAEICAGTSTFHFKERVRKHIYSDSEGEMHWSTDVYHAPEFTYSNVHLLPKTSHLWILSGGSCRSRGAPFSLHKDQDQMNPRSTERERRYLSSLSANNDQIRYKFFSSSFSGKKKDDRSPGYSEMNRIICTLHCNLIYPSILRENSDLLAKRRRNRLVIPVQSSQEREKELIPHSGISIELPINGIFRKKSILAFFDDPRYRTKSSGITQYETMGMHSIVKKEGLVDYRGINEFKPKYQMTIDRFFFIPEEVHILPESSSIMVRNNSLIGVDTRIALNTRSRAGGLVRVERKKRGIALQIFSGTIHFPGETDKISWDSGILIPPGTGKINSKESKKWKNGIYVQRITPTKKKHFVLFRPVVTYEIADGLNLARLFPPDLCQEKDNMQLQIVNYIVYGNGKPIREISDTSIQLVRTWFILNWDQDKKSASAEAAHASFVEVRAKGLIRDFLRIDLVKSPILDPRKRNDPSGSGLISDNVSDHTNINPFYSKPKMKQSPRQNHGTIRTLLNQNKECPSLMILSASNCFRMGPFNDVKSQNVIKESIKKDAIIQIRNSIGPLGTALQVVNFDSFYYFITHNQVLLTKYLQVENLKQTFQVLQYYLMDESGRIYNPDPRSNIVLNSFNLSWYFLPHNNYENSCEEISTIVSLGQFICENGCIAKNGPYLRSGQVLIVQLDSVVIRSAKPYLATPGATVHGHYGEILYDGDTVVTFLYEKSRSGDITQGLPKVEQVLEVRSVDSISVNLEKRVENWNEHITRILGFPWGFLIGAELTIVQSRISLVNKIQKVYRSQGVQIHNRHIEIIVRQITSKVLVSEDGMSNVFLPRELIGLLRAERTGRALEESICYKAFLLGITRTSLNTQSFISEASFQETARVLAKAALRGRIDWLKGLKENVVIGGMIPVGTGFKGLVHCSKQHKSIPKNKHFFEGEIRDILFHHRELFDSCISKNFHDTPEQSFRVFNDS.

Cys220, Cys289, Cys296, and Cys299 together coordinate Zn(2+).

It belongs to the RNA polymerase beta' chain family. RpoC2 subfamily. In terms of assembly, in plastids the minimal PEP RNA polymerase catalytic core is composed of four subunits: alpha, beta, beta', and beta''. When a (nuclear-encoded) sigma factor is associated with the core the holoenzyme is formed, which can initiate transcription. The cofactor is Zn(2+).

It localises to the plastid. The protein localises to the chloroplast. The catalysed reaction is RNA(n) + a ribonucleoside 5'-triphosphate = RNA(n+1) + diphosphate. In terms of biological role, DNA-dependent RNA polymerase catalyzes the transcription of DNA into RNA using the four ribonucleoside triphosphates as substrates. The sequence is that of DNA-directed RNA polymerase subunit beta'' from Oenothera biennis (German evening primrose).